We begin with the raw amino-acid sequence, 361 residues long: Feruloyl CoA ortho-hydroxylase 1 (361 aa).

One can recognise a Fe2OG dioxygenase domain in the interval 204 to 312 (TKESLFMGSI…RISVPIFVNP (109 aa)). Tyr-220 serves as a coordination point for 2-oxoglutarate. His-235, Asp-237, and His-293 together coordinate Fe cation. Residues Arg-303 and Ser-305 each contribute to the 2-oxoglutarate site.

It belongs to the iron/ascorbate-dependent oxidoreductase family. The cofactor is L-ascorbate. It depends on Fe(2+) as a cofactor. Highly expressed in roots, especially in the cortex.

The enzyme catalyses (E)-feruloyl-CoA + 2-oxoglutarate + O2 = (E)-6-hydroxyferuloyl-CoA + succinate + CO2. It catalyses the reaction (E)-6-hydroxyferuloyl-CoA = scopoletin + CoA. The protein operates within phenylpropanoid metabolism. 2-oxoglutarate (OG)- and Fe(II)-dependent dioxygenase (2OGD) involved in scopoletin biosynthesis. Converts feruloyl CoA into 6'-hydroxyferuloyl CoA but has no activity with ferulic acid, feruloylquinic acid, caffeic acid, caffeoyl CoA, p-coumaric acid, cinnamic acid, cinnamoyl CoA or benzoyl CoA. Required for the production and secretion of compounds (e.g. fluorescent coumarins) that facilitate the mobilization and uptake of iron from sources with low bioavailability or in high pH-induced iron deficiency conditions. Involved in the pathway of sideretin biosynthesis from feruloyl CoA, a redox-active catecholic metabolite exuded by roots in response to iron deficiency in order to facilitate the uptake of iron; this pathway consists in the successive conversion from feruloyl CoA to scopoletin, from scopoletin to fraxetin and from fraxetin to sideretin. Catalyzes the biosynthesis of scopoletin from feruloyl CoA. This is Feruloyl CoA ortho-hydroxylase 1 from Arabidopsis thaliana (Mouse-ear cress).